The primary structure comprises 88 residues: UPF0250 protein Shew_2940 (88 aa).

This sequence belongs to the UPF0250 family.

This is UPF0250 protein Shew_2940 from Shewanella loihica (strain ATCC BAA-1088 / PV-4).